The primary structure comprises 290 residues: Fat storage-inducing transmembrane protein 1 (290 aa).

5 helical membrane-spanning segments follow: residues 1–21, 26–46, 65–85, 173–193, and 205–225; these read MFLN…LGNT, HFHL…LWVS, SGWG…SFSV, LLLC…GPYL, and ILFL…LCLL.

The protein belongs to the FIT family. FIT1 subfamily.

Its subcellular location is the endoplasmic reticulum membrane. May play an important role in the formation of lipid droplets (LDs) which are storage organelles at the center of lipid and energy homeostasis. May directly bind to diacylglycerol (DAGs) and triacylglycerol. The protein is Fat storage-inducing transmembrane protein 1 (fitm1l) of Danio rerio (Zebrafish).